Reading from the N-terminus, the 676-residue chain is UvrABC system protein B (676 aa).

The Helicase ATP-binding domain occupies 35–192; sequence QGVADGLMYQ…ARLVAMQYTR (158 aa). Position 48–55 (48–55) interacts with ATP; the sequence is GVTGSGKT. The Beta-hairpin motif lies at 101–124; that stretch reads YYDYYQPEAYVPTRDLFIEKDSSV. Positions 439 to 605 constitute a Helicase C-terminal domain; that stretch reads QVDDLLGEIR…GVNKAVRELI (167 aa). Residues 634-669 form the UVR domain; sequence AREIKRLEKLMMDHARNLEFEQAAAARDALTALKNR.

The protein belongs to the UvrB family. Forms a heterotetramer with UvrA during the search for lesions. Interacts with UvrC in an incision complex.

Its subcellular location is the cytoplasm. The UvrABC repair system catalyzes the recognition and processing of DNA lesions. A damage recognition complex composed of 2 UvrA and 2 UvrB subunits scans DNA for abnormalities. Upon binding of the UvrA(2)B(2) complex to a putative damaged site, the DNA wraps around one UvrB monomer. DNA wrap is dependent on ATP binding by UvrB and probably causes local melting of the DNA helix, facilitating insertion of UvrB beta-hairpin between the DNA strands. Then UvrB probes one DNA strand for the presence of a lesion. If a lesion is found the UvrA subunits dissociate and the UvrB-DNA preincision complex is formed. This complex is subsequently bound by UvrC and the second UvrB is released. If no lesion is found, the DNA wraps around the other UvrB subunit that will check the other stand for damage. This is UvrABC system protein B from Bordetella avium (strain 197N).